Consider the following 245-residue polypeptide: 1-(5-phosphoribosyl)-5-[(5-phosphoribosylamino)methylideneamino] imidazole-4-carboxamide isomerase (245 aa).

Residue aspartate 7 is the Proton acceptor of the active site. Aspartate 129 functions as the Proton donor in the catalytic mechanism.

The protein belongs to the HisA/HisF family.

Its subcellular location is the cytoplasm. The catalysed reaction is 1-(5-phospho-beta-D-ribosyl)-5-[(5-phospho-beta-D-ribosylamino)methylideneamino]imidazole-4-carboxamide = 5-[(5-phospho-1-deoxy-D-ribulos-1-ylimino)methylamino]-1-(5-phospho-beta-D-ribosyl)imidazole-4-carboxamide. It participates in amino-acid biosynthesis; L-histidine biosynthesis; L-histidine from 5-phospho-alpha-D-ribose 1-diphosphate: step 4/9. This is 1-(5-phosphoribosyl)-5-[(5-phosphoribosylamino)methylideneamino] imidazole-4-carboxamide isomerase from Shewanella putrefaciens (strain CN-32 / ATCC BAA-453).